Consider the following 161-residue polypeptide: Arachidonate 5-lipoxygenase-activating protein (161 aa).

Topologically, residues 1-8 (MDQETVGN) are lumenal. The helical transmembrane segment at 9 to 30 (VVLLAIVTLISVVQNGFFAHKV) threads the bilayer. Topologically, residues 31 to 52 (EHESRTQNGRSFQRTGTLAFER) are cytoplasmic. Residues 53–77 (VYTANQNCVDAYPTFLAVLWSAGLL) traverse the membrane as a helical segment. The Lumenal segment spans residues 78 to 80 (CSQ). The chain crosses the membrane as a helical span at residues 81–102 (VPAAFAGLMYLFVRQKYFVGYL). At 103–107 (GERTQ) the chain is on the cytoplasmic side. An intramembrane segment occupies 108 to 115 (STPGYIFG). The helical transmembrane segment at 116-128 (KRIILFLFLMSVA) threads the bilayer. At 129–161 (GIFNYYLIFFFGSDFENYIKTISTTISPLLLIP) the chain is on the lumenal side.

The protein belongs to the MAPEG family. As to quaternary structure, homotrimer. Interacts with LTC4S and ALOX5.

Its subcellular location is the nucleus membrane. The protein localises to the endoplasmic reticulum membrane. Required for leukotriene biosynthesis by ALOX5 (5-lipoxygenase). Anchors ALOX5 to the membrane. Binds arachidonic acid, and could play an essential role in the transfer of arachidonic acid to ALOX5. Binds to MK-886, a compound that blocks the biosynthesis of leukotrienes. The polypeptide is Arachidonate 5-lipoxygenase-activating protein (ALOX5AP) (Homo sapiens (Human)).